Here is a 313-residue protein sequence, read N- to C-terminus: Cobalamin biosynthesis protein CobD (313 aa).

5 helical membrane passes run 52 to 72 (VAGAVHVGLLVGAVGLLGAAL), 79 to 99 (CWPVAATATATWAALGGTSLA), 154 to 174 (VVPLLWAASSGVPAVLGYRAI), 204 to 224 (YVGARATAVLVVICAPVVGGS), and 289 to 309 (AVVLSRVVQAGAAVLAVMLVY).

This sequence belongs to the CobD/CbiB family.

It localises to the cell membrane. It functions in the pathway cofactor biosynthesis; adenosylcobalamin biosynthesis. Converts cobyric acid to cobinamide by the addition of aminopropanol on the F carboxylic group. The sequence is that of Cobalamin biosynthesis protein CobD from Mycobacterium bovis (strain ATCC BAA-935 / AF2122/97).